The following is a 177-amino-acid chain: Large ribosomal subunit protein uL6 (177 aa).

This sequence belongs to the universal ribosomal protein uL6 family. In terms of assembly, part of the 50S ribosomal subunit.

Functionally, this protein binds to the 23S rRNA, and is important in its secondary structure. It is located near the subunit interface in the base of the L7/L12 stalk, and near the tRNA binding site of the peptidyltransferase center. This is Large ribosomal subunit protein uL6 from Pseudomonas fluorescens (strain SBW25).